We begin with the raw amino-acid sequence, 94 residues long: Integration host factor subunit beta (94 aa).

This sequence belongs to the bacterial histone-like protein family. Heterodimer of an alpha and a beta chain.

Functionally, this protein is one of the two subunits of integration host factor, a specific DNA-binding protein that functions in genetic recombination as well as in transcriptional and translational control. The protein is Integration host factor subunit beta of Vibrio campbellii (strain ATCC BAA-1116).